A 559-amino-acid chain; its full sequence is 3-aminoavenalumate diazotase (559 aa).

Position 181 (S181) interacts with Mg(2+). ATP is bound by residues A227, G332, and S336. E337 is a Mg(2+) binding site. ATP contacts are provided by D416 and R437.

This sequence belongs to the ATP-dependent AMP-binding enzyme family. Mg(2+) is required as a cofactor.

The enzyme catalyses 3-aminoavenalumate + nitrite + ATP = 3-diazoavenalumate + AMP + diphosphate + H2O. The catalysed reaction is (E)-3-aminocoumarate + nitrite + ATP + H(+) = (E)-3-diazocoumarate + AMP + diphosphate + H2O. It catalyses the reaction 3-amino-4-hydroxybenzoate + nitrite + ATP + H(+) = 3-diazo-4-hydroxybenzoate + AMP + diphosphate + H2O. In terms of biological role, ligase involved in the biosynthesis of avenalumic acid (AVA). Catalyzes the diazotization of 3-aminoavenalumic acid (3-AAA) to 3-diazoavenalumic acid (3-DAA). It can also act on 3-aminocoumaric acid (3-ACA) and 3-amino-4-hydroxybenzoic acid (3,4-AHBA) with lower activity. The sequence is that of 3-aminoavenalumate diazotase from Streptomyces sp.